We begin with the raw amino-acid sequence, 134 residues long: Probable salivary secreted peptide (134 aa).

The signal sequence occupies residues Met-1–Thr-24.

The protein localises to the secreted. This chain is Probable salivary secreted peptide, found in Bombus ignitus (Bumblebee).